The following is a 132-amino-acid chain: UPF0102 protein LI0223 (132 aa).

The protein belongs to the UPF0102 family.

The polypeptide is UPF0102 protein LI0223 (Lawsonia intracellularis (strain PHE/MN1-00)).